The chain runs to 329 residues: Sex comb on midleg-like protein 1 (329 aa).

Residues Ser-138 and Ser-238 each carry the phosphoserine modification. The segment at 138–157 is disordered; sequence SPTLPVSRRENNSPSNLPRP. Residues 258–325 enclose the SAM domain; that stretch reads WSVEAVVLFL…YYIDRLKQGK (68 aa).

This sequence belongs to the SCM family.

Its subcellular location is the nucleus. In terms of biological role, putative Polycomb group (PcG) protein. PcG proteins act by forming multiprotein complexes, which are required to maintain the transcriptionally repressive state of homeotic genes throughout development. May be involved in spermatogenesis during sexual maturation. The sequence is that of Sex comb on midleg-like protein 1 (SCML1) from Gorilla gorilla gorilla (Western lowland gorilla).